The following is a 74-amino-acid chain: Kappa-scoloptoxin(07)-Ssm2f (74 aa).

A signal peptide spans 1–19; that stretch reads MLVFYAILFVTVFSNTVMG. A propeptide spanning residues 20–41 is cleaved from the precursor; sequence ATIDKPIPKPIFREAIEEMEVN.

The protein belongs to the scoloptoxin-07 family. Contains 3 disulfide bonds. In terms of tissue distribution, expressed by the venom gland.

The protein localises to the secreted. In terms of biological role, inhibits voltage-gated potassium channels. This chain is Kappa-scoloptoxin(07)-Ssm2f, found in Scolopendra mutilans (Chinese red-headed centipede).